Here is a 513-residue protein sequence, read N- to C-terminus: Maturase K (513 aa).

It belongs to the intron maturase 2 family. MatK subfamily.

Its subcellular location is the plastid. The protein resides in the chloroplast. Its function is as follows. Usually encoded in the trnK tRNA gene intron. Probably assists in splicing its own and other chloroplast group II introns. The polypeptide is Maturase K (Sporobolus indicus (Smut grass)).